A 451-amino-acid polypeptide reads, in one-letter code: Eukaryotic translation initiation factor 3 subunit E (451 aa).

The PCI domain maps to 256–425 (TDLFFSPAYI…GTVIMNHPPQ (170 aa)).

This sequence belongs to the eIF-3 subunit E family. In terms of assembly, component of the eukaryotic translation initiation factor 3 (eIF-3) complex.

It localises to the cytoplasm. Its function is as follows. Component of the eukaryotic translation initiation factor 3 (eIF-3) complex, which is involved in protein synthesis of a specialized repertoire of mRNAs and, together with other initiation factors, stimulates binding of mRNA and methionyl-tRNAi to the 40S ribosome. The eIF-3 complex specifically targets and initiates translation of a subset of mRNAs involved in cell proliferation. The sequence is that of Eukaryotic translation initiation factor 3 subunit E (int6) from Aspergillus fumigatus (strain CBS 144.89 / FGSC A1163 / CEA10) (Neosartorya fumigata).